The chain runs to 478 residues: GDP-fucose protein O-fucosyltransferase 3 (478 aa).

At 1–9 the chain is on the cytoplasmic side; it reads MVRIQRGKL. A helical; Signal-anchor for type II membrane protein transmembrane segment spans residues 10–30; the sequence is LAFCLCVMATVFLLITLQVVV. Topologically, residues 31–478 are lumenal; it reads ELGKFEGKKF…QEFWALVFKD (448 aa). 2 N-linked (GlcNAc...) asparagine glycosylation sites follow: N110 and N168. An intrachain disulfide couples C389 to C392.

Belongs to the glycosyltransferase 10 family.

The protein resides in the endoplasmic reticulum membrane. It carries out the reaction L-threonyl-[protein] + GDP-beta-L-fucose = 3-O-(alpha-L-fucosyl)-L-threonyl-[protein] + GDP + H(+). It catalyses the reaction L-seryl-[protein] + GDP-beta-L-fucose = 3-O-(alpha-L-fucosyl)-L-seryl-[protein] + GDP + H(+). The protein operates within protein modification; protein glycosylation. Functionally, protein O-fucosyltransferase that specifically catalyzes O-fucosylation of serine or threonine residues in EMI domains of target proteins, such as MMRN1, MMRN2 and EMID1. Attaches fucose through an O-glycosidic linkage. O-fucosylation of EMI domain-containing proteins may be required for facilitating protein folding and secretion. May also show alpha-(1,3)-fucosyltransferase activity toward the innermost N-acetyl glucosamine (GlcNAc) residue in biantennary N-glycan acceptors. However, this was tested with a library of synthetic substrates and this activity is unsure in vivo. May be involved in biosynthesis of Lewis X-carrying biantennary N-glycans that regulate neuron stem cell self-renewal during brain development. This chain is GDP-fucose protein O-fucosyltransferase 3 (FUT10), found in Bos taurus (Bovine).